A 623-amino-acid chain; its full sequence is V-type proton ATPase catalytic subunit A (623 aa).

252–259 (GAFGCGKT) is an ATP binding site.

Belongs to the ATPase alpha/beta chains family. In terms of assembly, V-ATPase is a heteromultimeric enzyme composed of a peripheral catalytic V1 complex (components A to H) attached to an integral membrane V0 proton pore complex (components: a, c, c'', d and e). Binds to the deubiquitinating enzyme AMSH3.

It localises to the vacuole membrane. The catalysed reaction is ATP + H2O + 4 H(+)(in) = ADP + phosphate + 5 H(+)(out). Its function is as follows. Catalytic subunit of the peripheral V1 complex of vacuolar ATPase. V-ATPase vacuolar ATPase is responsible for acidifying a variety of intracellular compartments in eukaryotic cells. This is V-type proton ATPase catalytic subunit A (VHA-A) from Arabidopsis thaliana (Mouse-ear cress).